The chain runs to 134 residues: Small ribosomal subunit protein uS12 (134 aa).

Positions 1 to 27 are disordered; it reads MPTIQQLVRKGRESFADKSKSPALNSC. Residues 10 to 20 are compositionally biased toward basic and acidic residues; that stretch reads KGRESFADKSK. A 3-methylthioaspartic acid modification is found at Asp89. A disordered region spans residues 103–134; it reads DTAGVNGRTQRRSKYGAKRPKPGQAPAAKGKK. A compositionally biased stretch (basic residues) spans 111–123; sequence TQRRSKYGAKRPK. Residues 124 to 134 show a composition bias toward low complexity; the sequence is PGQAPAAKGKK.

It belongs to the universal ribosomal protein uS12 family. Part of the 30S ribosomal subunit. Contacts proteins S8 and S17. May interact with IF1 in the 30S initiation complex.

Functionally, with S4 and S5 plays an important role in translational accuracy. In terms of biological role, interacts with and stabilizes bases of the 16S rRNA that are involved in tRNA selection in the A site and with the mRNA backbone. Located at the interface of the 30S and 50S subunits, it traverses the body of the 30S subunit contacting proteins on the other side and probably holding the rRNA structure together. The combined cluster of proteins S8, S12 and S17 appears to hold together the shoulder and platform of the 30S subunit. The chain is Small ribosomal subunit protein uS12 from Porphyromonas gingivalis (strain ATCC 33277 / DSM 20709 / CIP 103683 / JCM 12257 / NCTC 11834 / 2561).